Reading from the N-terminus, the 103-residue chain is Small ribosomal subunit protein uS10 (103 aa).

It belongs to the universal ribosomal protein uS10 family. Part of the 30S ribosomal subunit.

Involved in the binding of tRNA to the ribosomes. The sequence is that of Small ribosomal subunit protein uS10 from Xylella fastidiosa (strain 9a5c).